The chain runs to 89 residues: Small ribosomal subunit protein uS15 (89 aa).

This sequence belongs to the universal ribosomal protein uS15 family. As to quaternary structure, part of the 30S ribosomal subunit. Forms a bridge to the 50S subunit in the 70S ribosome, contacting the 23S rRNA.

One of the primary rRNA binding proteins, it binds directly to 16S rRNA where it helps nucleate assembly of the platform of the 30S subunit by binding and bridging several RNA helices of the 16S rRNA. Functionally, forms an intersubunit bridge (bridge B4) with the 23S rRNA of the 50S subunit in the ribosome. In Desulfatibacillum aliphaticivorans, this protein is Small ribosomal subunit protein uS15.